We begin with the raw amino-acid sequence, 905 residues long: Protein translocase subunit SecA (905 aa).

ATP contacts are provided by residues glutamine 89, 107-111 (GEGKT), and aspartate 502. Residues cysteine 887, cysteine 889, cysteine 898, and histidine 899 each contribute to the Zn(2+) site.

The protein belongs to the SecA family. In terms of assembly, monomer and homodimer. Part of the essential Sec protein translocation apparatus which comprises SecA, SecYEG and auxiliary proteins SecDF-YajC and YidC. Zn(2+) serves as cofactor.

The protein resides in the cell inner membrane. The protein localises to the cytoplasm. It carries out the reaction ATP + H2O + cellular proteinSide 1 = ADP + phosphate + cellular proteinSide 2.. Its function is as follows. Part of the Sec protein translocase complex. Interacts with the SecYEG preprotein conducting channel. Has a central role in coupling the hydrolysis of ATP to the transfer of proteins into and across the cell membrane, serving both as a receptor for the preprotein-SecB complex and as an ATP-driven molecular motor driving the stepwise translocation of polypeptide chains across the membrane. In Rhizobium leguminosarum bv. trifolii (strain WSM2304), this protein is Protein translocase subunit SecA.